The following is a 415-amino-acid chain: Extracellular signal-regulated kinase 1 (415 aa).

Residues tyrosine 66–leucine 369 enclose the Protein kinase domain. ATP contacts are provided by residues valine 72–valine 80 and lysine 95. Aspartate 190 functions as the Proton acceptor in the catalytic mechanism. Threonine 226 is subject to Phosphothreonine. Positions threonine 226–tyrosine 228 match the TXY motif. Tyrosine 228 bears the Phosphotyrosine mark.

This sequence belongs to the protein kinase superfamily. CMGC Ser/Thr protein kinase family. MAP kinase subfamily. Mg(2+) serves as cofactor. In terms of processing, dually phosphorylated on Thr-226 and Tyr-228, which activates the enzyme.

The enzyme catalyses L-seryl-[protein] + ATP = O-phospho-L-seryl-[protein] + ADP + H(+). It carries out the reaction L-threonyl-[protein] + ATP = O-phospho-L-threonyl-[protein] + ADP + H(+). Its activity is regulated as follows. Activated by tyrosine and threonine phosphorylation. In Candida albicans (strain WO-1) (Yeast), this protein is Extracellular signal-regulated kinase 1 (CEK1).